The sequence spans 301 residues: Transcription elongation factor A protein 1 (301 aa).

Methionine 1 bears the N-acetylmethionine mark. In terms of domain architecture, TFIIS N-terminal spans 3 to 80 (DEVIRIAKKM…KSWKKLLDGP (78 aa)). Lysine 55 is covalently cross-linked (Glycyl lysine isopeptide (Lys-Gly) (interchain with G-Cter in ubiquitin)). A phosphoserine mark is found at serine 57, serine 81, serine 97, and serine 100. Positions 76–93 (LLDGPSTDKDSEEKKKDT) are enriched in basic and acidic residues. A disordered region spans residues 76 to 139 (LLDGPSTDKD…FPRAPSTSDS (64 aa)). The TFIIS central domain occupies 140–256 (VRLKCREMLA…EHQMAKTGGT (117 aa)). The TFIIS-type zinc finger occupies 259–299 (DLFTCGKCKKKNCTYTQVQTRSADEPMTTFVVCNECGNRWK). Positions 263, 266, 291, and 294 each coordinate Zn(2+).

The protein belongs to the TFS-II family. Interacts with EAF2. Associates with UBR5 and forms a transcription regulatory complex made of CDK9, Pol II, UBR5 and TCEA1/TFIIS. Part of TBP-based Pol II pre-initiation complex (PIC), in which Pol II core assembles with general transcription factors and other specific initiation factors including GTF2E1, GTF2E2, GTF2F1, GTF2F2, TCEA1, ERCC2, ERCC3, GTF2H2, GTF2H3, GTF2H4, GTF2H5, GTF2A1, GTF2A2, GTF2B and TBP; this large multi-subunit PIC complex mediates DNA unwinding and targets Pol II core to the transcription start site where the first phosphodiester bond forms.

It localises to the nucleus. Its function is as follows. Necessary for efficient RNA polymerase II transcription elongation past template-encoded arresting sites. The arresting sites in DNA have the property of trapping a certain fraction of elongating RNA polymerases that pass through, resulting in locked ternary complexes. Cleavage of the nascent transcript by S-II allows the resumption of elongation from the new 3'-terminus. The protein is Transcription elongation factor A protein 1 (TCEA1) of Bos taurus (Bovine).